The primary structure comprises 344 residues: N-acetyl-gamma-glutamyl-phosphate reductase 1 (344 aa).

Residue C150 is part of the active site.

It belongs to the NAGSA dehydrogenase family. Type 1 subfamily.

Its subcellular location is the cytoplasm. The enzyme catalyses N-acetyl-L-glutamate 5-semialdehyde + phosphate + NADP(+) = N-acetyl-L-glutamyl 5-phosphate + NADPH + H(+). Its pathway is amino-acid biosynthesis; L-arginine biosynthesis; N(2)-acetyl-L-ornithine from L-glutamate: step 3/4. Catalyzes the NADPH-dependent reduction of N-acetyl-5-glutamyl phosphate to yield N-acetyl-L-glutamate 5-semialdehyde. This chain is N-acetyl-gamma-glutamyl-phosphate reductase 1, found in Pseudomonas putida (strain ATCC 47054 / DSM 6125 / CFBP 8728 / NCIMB 11950 / KT2440).